Here is a 324-residue protein sequence, read N- to C-terminus: MAFRLKLCPEKTNIDFFWAAPVTFGFSVFLMAASLVAWLTLGLNFGIDFRGGTTIRTESTQAVDVAAYRAALEGQDLGDISITEVFDPGFRADQHVAMVRIGAQDATQSITPEQIGQVEEALKTVDPSITFPSVESVGPKVSGELIRSAILAVAAACAGIAVYIWLRFEWQFALGSVAALIHDVLVTIGVFALFQIKFDLTTVAALLTVLGYSINDTVVVFDRLRENLVKYKTMPLRDVMNLSVNETLSRTIMTLMTTLIALVSLLVFGGDVIRGFVFAITFGVVIGTYSSVYMAKNIVLYLGVDRGGPKKDSKAGTQFANIDA.

6 helical membrane passes run 16 to 36, 145 to 165, 174 to 194, 201 to 221, 247 to 269, and 276 to 295; these read FFWA…ASLV, LIRS…VYIW, LGSV…FALF, TTVA…VVVF, TLSR…LVFG, and FVFA…VYMA.

Belongs to the SecD/SecF family. SecF subfamily. Forms a complex with SecD. Part of the essential Sec protein translocation apparatus which comprises SecA, SecYEG and auxiliary proteins SecDF-YajC and YidC.

It is found in the cell inner membrane. Functionally, part of the Sec protein translocase complex. Interacts with the SecYEG preprotein conducting channel. SecDF uses the proton motive force (PMF) to complete protein translocation after the ATP-dependent function of SecA. The chain is Protein translocase subunit SecF from Cereibacter sphaeroides (strain ATCC 17023 / DSM 158 / JCM 6121 / CCUG 31486 / LMG 2827 / NBRC 12203 / NCIMB 8253 / ATH 2.4.1.) (Rhodobacter sphaeroides).